Consider the following 615-residue polypeptide: DNA mismatch repair protein MutL (615 aa).

Positions His362–Tyr397 are disordered. Positions Ala373 to Ala387 are enriched in low complexity.

It belongs to the DNA mismatch repair MutL/HexB family.

Its function is as follows. This protein is involved in the repair of mismatches in DNA. It is required for dam-dependent methyl-directed DNA mismatch repair. May act as a 'molecular matchmaker', a protein that promotes the formation of a stable complex between two or more DNA-binding proteins in an ATP-dependent manner without itself being part of a final effector complex. The chain is DNA mismatch repair protein MutL from Escherichia coli O81 (strain ED1a).